We begin with the raw amino-acid sequence, 179 residues long: Large ribosomal subunit protein uL6 (179 aa).

This sequence belongs to the universal ribosomal protein uL6 family. As to quaternary structure, part of the 50S ribosomal subunit.

Functionally, this protein binds to the 23S rRNA, and is important in its secondary structure. It is located near the subunit interface in the base of the L7/L12 stalk, and near the tRNA binding site of the peptidyltransferase center. The sequence is that of Large ribosomal subunit protein uL6 from Bifidobacterium animalis subsp. lactis (strain AD011).